The primary structure comprises 342 residues: Probable dual-specificity RNA methyltransferase RlmN (342 aa).

Glu-91 serves as the catalytic Proton acceptor. One can recognise a Radical SAM core domain in the interval 97–326 (YRFGNTACVS…CTVRRELGSD (230 aa)). Cys-104 and Cys-331 are oxidised to a cystine. [4Fe-4S] cluster contacts are provided by Cys-111, Cys-115, and Cys-118. S-adenosyl-L-methionine is bound by residues 157–158 (GE), Ser-189, 212–214 (SLH), and Asn-288. Cys-331 serves as the catalytic S-methylcysteine intermediate.

This sequence belongs to the radical SAM superfamily. RlmN family. [4Fe-4S] cluster is required as a cofactor.

Its subcellular location is the cytoplasm. The catalysed reaction is adenosine(2503) in 23S rRNA + 2 reduced [2Fe-2S]-[ferredoxin] + 2 S-adenosyl-L-methionine = 2-methyladenosine(2503) in 23S rRNA + 5'-deoxyadenosine + L-methionine + 2 oxidized [2Fe-2S]-[ferredoxin] + S-adenosyl-L-homocysteine. It catalyses the reaction adenosine(37) in tRNA + 2 reduced [2Fe-2S]-[ferredoxin] + 2 S-adenosyl-L-methionine = 2-methyladenosine(37) in tRNA + 5'-deoxyadenosine + L-methionine + 2 oxidized [2Fe-2S]-[ferredoxin] + S-adenosyl-L-homocysteine. In terms of biological role, specifically methylates position 2 of adenine 2503 in 23S rRNA and position 2 of adenine 37 in tRNAs. The protein is Probable dual-specificity RNA methyltransferase RlmN of Thermoanaerobacter pseudethanolicus (strain ATCC 33223 / 39E) (Clostridium thermohydrosulfuricum).